Consider the following 259-residue polypeptide: 7-cyano-7-deazaguanine synthase (259 aa).

32 to 42 (LSGGLDSVTCL) contributes to the ATP binding site. Residues C223, C233, C236, and C239 each coordinate Zn(2+).

Belongs to the QueC family. It depends on Zn(2+) as a cofactor.

The enzyme catalyses 7-carboxy-7-deazaguanine + NH4(+) + ATP = 7-cyano-7-deazaguanine + ADP + phosphate + H2O + H(+). It functions in the pathway purine metabolism; 7-cyano-7-deazaguanine biosynthesis. Its function is as follows. Catalyzes the ATP-dependent conversion of 7-carboxy-7-deazaguanine (CDG) to 7-cyano-7-deazaguanine (preQ(0)). This is 7-cyano-7-deazaguanine synthase from Psychrobacter cryohalolentis (strain ATCC BAA-1226 / DSM 17306 / VKM B-2378 / K5).